The sequence spans 2144 residues: Cadherin EGF LAG seven-pass G-type receptor 2 (2144 aa).

Cadherin domains lie at 1–40, 41–146, 147–248, and 253–371; these read EDQVSYTLAITARDNGIPQKSDTTYLEILVNDVNDNAPQF, LRDS…PPVF, EQDE…PPVL, and ILFN…SPLL. Over 1–1605 the chain is Extracellular; the sequence is EDQVSYTLAI…GEILPLKTLT (1605 aa). N261, N301, N407, and N437 each carry an N-linked (GlcNAc...) asparagine glycan. The EGF-like 1; calcium-binding domain occupies 453-511; the sequence is DDNICLREPCENYMRCVSVLRFDSSAPFIASSSVLFRPIHPVGGLRCRCPPGFTGDYCE. Disulfide bonds link C457–C468, C462–C499, C501–C510, C517–C528, C522–C537, C539–C548, C557–C568, C562–C578, and C580–C590. The EGF-like 2; calcium-binding domain maps to 513–549; that stretch reads EVDLCYSRPCGPHGHCRSREGGYTCLCRDGYTGEHCE. The 39-residue stretch at 553-591 folds into the EGF-like 3; calcium-binding domain; it reads RSGRCTPGVCKNGGTCVNLLVGGFKCDCPSGDFEKPFCQ. The Laminin G-like 1 domain occupies 592-796; sequence VTTRSFPARS…IANNGTVPGC (205 aa). 2 N-linked (GlcNAc...) asparagine glycosylation sites follow: N726 and N790. 4 disulfides stabilise this stretch: C770–C796, C803–C814, C808–C823, and C825–C834. The EGF-like 4; calcium-binding domain occupies 799–835; it reads KKNVCDSNTCHNGGTCVNQWDAFSCECPLGFGGKSCA. (3R)-3-hydroxyasparagine is present on N816. A Laminin G-like 2 domain is found at 839–1016; sequence ANPQRFLGSS…GESINVEPGC (178 aa). N966 is a glycosylation site (N-linked (GlcNAc...) asparagine). Disulfide bonds link C986–C1016, C1022–C1033, C1027–C1042, C1044–C1053, C1057–C1068, C1062–C1080, C1082–C1091, C1112–C1124, C1114–C1131, C1133–C1146, C1149–C1161, C1151–C1168, C1170–C1179, and C1182–C1194. Residues 1018–1053 form the EGF-like 5; calcium-binding domain; it reads WPDPCDSNPCPTNSYCSNDWDSYSCSCDPGYYGDNC. N1035 bears the (3R)-3-hydroxyasparagine mark. Residue N1052 is glycosylated (N-linked (GlcNAc...) asparagine). One can recognise an EGF-like 6; calcium-binding domain in the interval 1054–1092; sequence TNVCDLNPCEHQSACTRKPSAPHGYICECLPNYLGPYCE. In terms of domain architecture, EGF-like 7; calcium-binding spans 1108–1147; that stretch reads TCGPCNCDVSKGFDPDCNKTSGECHCKENHYRPPSSPTCL. An N-linked (GlcNAc...) asparagine glycan is attached at N1125. Positions 1149-1196 constitute a Laminin EGF-like domain; sequence CDCYPTGSLSRVCDPEDGQCPCKPGVIGRQCDRCDNPFAEVTTNGCEV. N1249, N1268, and N1286 each carry an N-linked (GlcNAc...) asparagine glycan. The GAIN-B domain occupies 1424–1594; that stretch reads ETTVILPESV…AVLMDVSRRE (171 aa). A disordered region spans residues 1439 to 1466; it reads PMVRSAGPGEAQETEELARRQRRHPELS. 2 cysteine pairs are disulfide-bonded: C1544-C1576 and C1564-C1578. A GPS region spans residues 1544–1594; that stretch reads CVFWNHSILVSGTGGWSARGCEVVFRNESHVSCQCNHMTSFAVLMDVSRRE. N-linked (GlcNAc...) asparagine glycans are attached at residues N1548 and N1570. A helical membrane pass occupies residues 1606–1626; sequence YVALGVTLAALMITFLFLTLL. Over 1627–1641 the chain is Cytoplasmic; that stretch reads RALRSNQHGIRRNLT. The helical transmembrane segment at 1642–1662 threads the bilayer; it reads AALGLAQLVFLLGINQADLPF. A topological domain (extracellular) is located at residue A1663. A helical transmembrane segment spans residues 1664–1684; the sequence is CTVIAILLHFLYLCTFSWALL. The Cytoplasmic portion of the chain corresponds to 1685-1705; sequence EALHLYRALTEVRDVNASPMR. A helical membrane pass occupies residues 1706 to 1726; sequence FYYMLGWGVPAFITGLAVGLD. Topologically, residues 1727–1744 are extracellular; it reads PEGYGNPDFCWLSIYDTL. The chain crosses the membrane as a helical span at residues 1745-1765; sequence IWSFAGPVAFAVSMSVFLYIL. Topologically, residues 1766–1789 are cytoplasmic; that stretch reads SARASCAAQRQGFEKKGPVSGLRS. A helical membrane pass occupies residues 1790–1810; sequence SFTVLLLLSATWLLALLSVNS. The Extracellular segment spans residues 1811-1816; sequence DTLLFH. The chain crosses the membrane as a helical span at residues 1817–1837; that stretch reads YLFAACNCVQGPFIFLSYVVL. The Cytoplasmic segment spans residues 1838–2144; it reads SKEVRKALKF…SEFLFFNFLH (307 aa). Residues 1914 to 2109 form a disordered region; the sequence is TLNPGQVPPG…PPRPPPRQSL (196 aa). Residues 1943–1955 are compositionally biased toward acidic residues; that stretch reads TDSDSDLSLEDDQ. Over residues 2016–2025 the composition is skewed to polar residues; the sequence is GTTTKENSGS. Residues 2028-2040 are compositionally biased toward basic and acidic residues; that stretch reads LEERPRENGDALT. Positions 2082–2095 are enriched in polar residues; it reads GTGSSRGSTASEGS.

The protein belongs to the G-protein coupled receptor 2 family. LN-TM7 subfamily. As to quaternary structure, heterodimer of 2 chains generated by proteolytic processing; the large extracellular N-terminal fragment and the membrane-bound C-terminal fragment predominantly remain associated and non-covalently linked. Post-translationally, the iron and 2-oxoglutarate dependent 3-hydroxylation of aspartate and asparagine is (R) stereospecific within EGF domains. Autoproteolytically processed at the GPS region of the GAIN-B domain; this cleavage modulates receptor activity. In terms of tissue distribution, expressed in the brain. High expression in cerebellum and olfactory bulb. Weaker expression in cerebral cortex, hippocampus and brain stem.

It is found in the cell membrane. Receptor that may have an important role in cell/cell signaling during nervous system formation. The protein is Cadherin EGF LAG seven-pass G-type receptor 2 of Rattus norvegicus (Rat).